The following is a 789-amino-acid chain: Cell pattern formation-associated protein stuA (789 aa).

Disordered regions lie at residues 50 to 131 and 205 to 224; these read PALS…NTVG and PGGV…SVSS. 3 stretches are compositionally biased toward polar residues: residues 55-69, 76-88, and 115-131; these read PTAS…SYRT, ASHN…SLSG, and LDSS…NTVG. The HTH APSES-type domain maps to 272–378; the sequence is RVTATLWEDE…HNIGGLLYHP (107 aa). A DNA-binding region (H-T-H motif) is located at residues 306–327; that stretch reads GTKLLNVAGMTRGRRDGILKSE. Disordered regions lie at residues 389 to 459, 487 to 543, and 616 to 789; these read QESQ…ASSL, SIDT…YAPQ, and HDSA…ARRR. Polar residues-rich tracts occupy residues 419–438, 487–529, 620–636, 645–667, and 676–713; these read LQTP…SQSA, SIDT…SKSY, GYNT…NPSV, QLAS…TPRT, and SGYN…SVAS. Residues 731 to 758 are nuclear localization domain; that stretch reads KRMREDDDVDQIVRPDSRGAEYESKRRK. Residues 741–754 show a composition bias toward basic and acidic residues; it reads QIVRPDSRGAEYES.

It belongs to the EFG1/PHD1/stuA family.

It is found in the nucleus. Functionally, transcription factor that regulates asexual reproduction. Binds the StuA-response elements (StRE) with the consensus sequence 5'-(A/T)CGCG(T/A)N(A/C)-3' at the promoters of target genes. In Aspergillus flavus (strain ATCC 200026 / FGSC A1120 / IAM 13836 / NRRL 3357 / JCM 12722 / SRRC 167), this protein is Cell pattern formation-associated protein stuA.